We begin with the raw amino-acid sequence, 678 residues long: DNA ligase (678 aa).

Residues 36 to 40 (DAEYD), 85 to 86 (SL), and Glu117 each bind NAD(+). Lys119 serves as the catalytic N6-AMP-lysine intermediate. Positions 140, 177, 294, and 318 each coordinate NAD(+). Residues Cys412, Cys415, Cys430, and Cys436 each contribute to the Zn(2+) site. The BRCT domain occupies 595-678 (ADEQPLNGQT…NLLREHGIEV (84 aa)).

The protein belongs to the NAD-dependent DNA ligase family. LigA subfamily. Requires Mg(2+) as cofactor. Mn(2+) is required as a cofactor.

The catalysed reaction is NAD(+) + (deoxyribonucleotide)n-3'-hydroxyl + 5'-phospho-(deoxyribonucleotide)m = (deoxyribonucleotide)n+m + AMP + beta-nicotinamide D-nucleotide.. In terms of biological role, DNA ligase that catalyzes the formation of phosphodiester linkages between 5'-phosphoryl and 3'-hydroxyl groups in double-stranded DNA using NAD as a coenzyme and as the energy source for the reaction. It is essential for DNA replication and repair of damaged DNA. The sequence is that of DNA ligase from Marinobacter nauticus (strain ATCC 700491 / DSM 11845 / VT8) (Marinobacter aquaeolei).